Consider the following 157-residue polypeptide: ATP synthase subunit b (157 aa).

The helical transmembrane segment at 7-29 threads the bilayer; it reads MFGQLIMFTMFTWFCMKFVWPPI.

Belongs to the ATPase B chain family. As to quaternary structure, F-type ATPases have 2 components, F(1) - the catalytic core - and F(0) - the membrane proton channel. F(1) has five subunits: alpha(3), beta(3), gamma(1), delta(1), epsilon(1). F(0) has three main subunits: a(1), b(2) and c(10-14). The alpha and beta chains form an alternating ring which encloses part of the gamma chain. F(1) is attached to F(0) by a central stalk formed by the gamma and epsilon chains, while a peripheral stalk is formed by the delta and b chains.

It localises to the cell inner membrane. Its function is as follows. F(1)F(0) ATP synthase produces ATP from ADP in the presence of a proton or sodium gradient. F-type ATPases consist of two structural domains, F(1) containing the extramembraneous catalytic core and F(0) containing the membrane proton channel, linked together by a central stalk and a peripheral stalk. During catalysis, ATP synthesis in the catalytic domain of F(1) is coupled via a rotary mechanism of the central stalk subunits to proton translocation. Functionally, component of the F(0) channel, it forms part of the peripheral stalk, linking F(1) to F(0). The sequence is that of ATP synthase subunit b from Ruthia magnifica subsp. Calyptogena magnifica.